A 395-amino-acid polypeptide reads, in one-letter code: Accessory Sec system protein translocase subunit SecY2 (395 aa).

Transmembrane regions (helical) follow at residues 13 to 33 (VSFSLFIVIIYVMGLYIPLPF), 63 to 83 (ISIFSIGLNPLMFSMLIIQLL), 102 to 122 (LMQFLTMIITIIQAALLVFAF), 128 to 148 (GLEDFEMILILSAGSCLVVWL), 157 to 177 (VGASAPVILTSILNGAIPNII), 190 to 210 (WIWLAALAIFILLLIKFWLAF), 239 to 259 (MAAMMMYMVGMAILTLPLMVG), 272 to 292 (VFQASFSAVMGILIFYFFTFV), 326 to 346 (LIWIIAFPGAVLNAFQLVFGL), and 355 to 375 (YAGFAIIPMNVVMITMFMGGI).

Belongs to the SecY/SEC61-alpha family. SecY2 subfamily. Component of the accessory SecA2/SecY2 protein translocase complex required to export cell wall proteins. May form heterotrimers with SecE and SecG subunits.

The protein localises to the cell membrane. Functionally, part of the accessory SecA2/SecY2 system specifically required for export of possible cell wall proteins. The central subunit of a protein translocation channel. The sequence is that of Accessory Sec system protein translocase subunit SecY2 from Lactobacillus johnsonii (strain CNCM I-12250 / La1 / NCC 533).